A 134-amino-acid polypeptide reads, in one-letter code: Protein PsiE homolog (134 aa).

The next 4 membrane-spanning stretches (helical) occupy residues 14-34 (LQWI…IFLI), 56-76 (VESI…IKYF), 82-102 (FPLR…IIVS), and 106-126 (PMET…LYIS).

It belongs to the PsiE family.

The protein resides in the cell membrane. The protein is Protein PsiE homolog of Bacillus anthracis.